The following is a 616-amino-acid chain: Dihydroxy-acid dehydratase (616 aa).

D81 contacts Mg(2+). Residue C122 coordinates [2Fe-2S] cluster. Residues D123 and K124 each contribute to the Mg(2+) site. An N6-carboxylysine modification is found at K124. A [2Fe-2S] cluster-binding site is contributed by C195. E491 contacts Mg(2+). S517 functions as the Proton acceptor in the catalytic mechanism.

The protein belongs to the IlvD/Edd family. Homodimer. [2Fe-2S] cluster serves as cofactor. Requires Mg(2+) as cofactor.

It carries out the reaction (2R)-2,3-dihydroxy-3-methylbutanoate = 3-methyl-2-oxobutanoate + H2O. The catalysed reaction is (2R,3R)-2,3-dihydroxy-3-methylpentanoate = (S)-3-methyl-2-oxopentanoate + H2O. It functions in the pathway amino-acid biosynthesis; L-isoleucine biosynthesis; L-isoleucine from 2-oxobutanoate: step 3/4. It participates in amino-acid biosynthesis; L-valine biosynthesis; L-valine from pyruvate: step 3/4. Functionally, functions in the biosynthesis of branched-chain amino acids. Catalyzes the dehydration of (2R,3R)-2,3-dihydroxy-3-methylpentanoate (2,3-dihydroxy-3-methylvalerate) into 2-oxo-3-methylpentanoate (2-oxo-3-methylvalerate) and of (2R)-2,3-dihydroxy-3-methylbutanoate (2,3-dihydroxyisovalerate) into 2-oxo-3-methylbutanoate (2-oxoisovalerate), the penultimate precursor to L-isoleucine and L-valine, respectively. In Pectobacterium carotovorum subsp. carotovorum (strain PC1), this protein is Dihydroxy-acid dehydratase.